An 845-amino-acid chain; its full sequence is Beta-glucosidase (845 aa).

Asparagine 66 carries N-linked (GlcNAc...) asparagine glycosylation. Aspartate 225 is a catalytic residue. Asparagine 304, asparagine 438, and asparagine 621 each carry an N-linked (GlcNAc...) asparagine glycan. Positions 408-568 (AENAGLIAKF…DDDEEIRNAA (161 aa)) constitute a PA14 domain.

The protein belongs to the glycosyl hydrolase 3 family. As to quaternary structure, homotetramer.

The catalysed reaction is Hydrolysis of terminal, non-reducing beta-D-glucosyl residues with release of beta-D-glucose.. It participates in glycan metabolism; cellulose degradation. The sequence is that of Beta-glucosidase from Kluyveromyces marxianus (Yeast).